The sequence spans 109 residues: Cell division protein ZapA (109 aa).

Residues 22-99 (EQQDALNMAA…IEQALLEQGR (78 aa)) adopt a coiled-coil conformation.

Belongs to the ZapA family. Type 1 subfamily. In terms of assembly, homodimer. Interacts with FtsZ.

The protein localises to the cytoplasm. In terms of biological role, activator of cell division through the inhibition of FtsZ GTPase activity, therefore promoting FtsZ assembly into bundles of protofilaments necessary for the formation of the division Z ring. It is recruited early at mid-cell but it is not essential for cell division. This Yersinia pseudotuberculosis serotype O:1b (strain IP 31758) protein is Cell division protein ZapA.